The following is a 224-amino-acid chain: Peptidyl-prolyl cis-trans isomerase FKBP3 (224 aa).

An N-acetylalanine modification is found at Ala-2. Ser-36 bears the Phosphoserine mark. The segment at 87 to 119 (NVKLNEDKPKETKSEETPDEGPPKYTKSVLKKG) is disordered. Positions 89–102 (KLNEDKPKETKSEE) are enriched in basic and acidic residues. Residue Lys-99 is modified to N6-acetyllysine. Residues 128-224 (GDVVHCWYTG…IFEVELVDID (97 aa)) form the PPIase FKBP-type domain. Residue Ser-152 is modified to Phosphoserine. At Lys-170 the chain carries N6-acetyllysine.

The protein belongs to the FKBP-type PPIase family.

The protein localises to the nucleus. The catalysed reaction is [protein]-peptidylproline (omega=180) = [protein]-peptidylproline (omega=0). With respect to regulation, inhibited preferentially by rapamycin over FK506. FK506- and rapamycin-binding proteins (FKBPs) constitute a family of receptors for the two immunosuppressants which inhibit T-cell proliferation by arresting two distinct cytoplasmic signal transmission pathways. PPIases accelerate the folding of proteins. This Oryctolagus cuniculus (Rabbit) protein is Peptidyl-prolyl cis-trans isomerase FKBP3 (FKBP3).